The primary structure comprises 350 residues: Biotin synthase (350 aa).

The Radical SAM core domain occupies 38–265; it reads NHVQVSTLLS…MSAVRLSAGR (228 aa). Positions 53, 57, and 60 each coordinate [4Fe-4S] cluster. Residues C97, C128, C188, and R260 each coordinate [2Fe-2S] cluster.

The protein belongs to the radical SAM superfamily. Biotin synthase family. Homodimer. Requires [4Fe-4S] cluster as cofactor. The cofactor is [2Fe-2S] cluster.

The catalysed reaction is (4R,5S)-dethiobiotin + (sulfur carrier)-SH + 2 reduced [2Fe-2S]-[ferredoxin] + 2 S-adenosyl-L-methionine = (sulfur carrier)-H + biotin + 2 5'-deoxyadenosine + 2 L-methionine + 2 oxidized [2Fe-2S]-[ferredoxin]. The protein operates within cofactor biosynthesis; biotin biosynthesis; biotin from 7,8-diaminononanoate: step 2/2. In terms of biological role, catalyzes the conversion of dethiobiotin (DTB) to biotin by the insertion of a sulfur atom into dethiobiotin via a radical-based mechanism. The sequence is that of Biotin synthase from Vibrio atlanticus (strain LGP32) (Vibrio splendidus (strain Mel32)).